A 393-amino-acid polypeptide reads, in one-letter code: NAD(P)H-quinone oxidoreductase subunit H, chloroplastic (393 aa).

Belongs to the complex I 49 kDa subunit family. In terms of assembly, NDH is composed of at least 16 different subunits, 5 of which are encoded in the nucleus.

Its subcellular location is the plastid. It localises to the chloroplast thylakoid membrane. The catalysed reaction is a plastoquinone + NADH + (n+1) H(+)(in) = a plastoquinol + NAD(+) + n H(+)(out). It catalyses the reaction a plastoquinone + NADPH + (n+1) H(+)(in) = a plastoquinol + NADP(+) + n H(+)(out). Functionally, NDH shuttles electrons from NAD(P)H:plastoquinone, via FMN and iron-sulfur (Fe-S) centers, to quinones in the photosynthetic chain and possibly in a chloroplast respiratory chain. The immediate electron acceptor for the enzyme in this species is believed to be plastoquinone. Couples the redox reaction to proton translocation, and thus conserves the redox energy in a proton gradient. In Barbarea verna (Land cress), this protein is NAD(P)H-quinone oxidoreductase subunit H, chloroplastic.